Here is a 617-residue protein sequence, read N- to C-terminus: ATP-dependent RNA helicase DBP1 (617 aa).

The tract at residues 1 to 90 is disordered; sequence MADLPQKVSN…TSANYNRGGS (90 aa). A compositionally biased stretch (polar residues) spans 7 to 17; that stretch reads KVSNLSINNKE. Residues 38–58 show a composition bias toward basic and acidic residues; it reads PSFERSTPKQEDKVTGGDFFR. The segment covering 79 to 90 has biased composition (polar residues); the sequence is GGTSANYNRGGS. The Q motif motif lies at 154-182; sequence LDFSSPPLDELLMENIKLASFTKPTPVQK. One can recognise a Helicase ATP-binding domain in the interval 185–374; that stretch reads IPIVTKGRDL…RDFLDNYIFL (190 aa). 198–205 lines the ATP pocket; it reads AQTGSGKT. A DEAD box motif is present at residues 318–321; it reads DEAD. Positions 385-545 constitute a Helicase C-terminal domain; that stretch reads NITQRILYVD…EVPTFLSDLS (161 aa). Positions 542 to 617 are disordered; the sequence is SDLSRQNSRG…GYGNSNASWW (76 aa). Polar residues predominate over residues 580–594; that stretch reads FGSTRPRNTGTSNWG.

It belongs to the DEAD box helicase family. DDX3/DED1 subfamily.

Its subcellular location is the cytoplasm. It carries out the reaction ATP + H2O = ADP + phosphate + H(+). ATP-binding RNA helicase involved in translation initiation. Remodels RNA in response to ADP and ATP concentrations by facilitating disruption, but also formation of RNA duplexes. Redundant to DED1, may be required in conditions in which DED1 expression is decreased. The chain is ATP-dependent RNA helicase DBP1 (DBP1) from Saccharomyces cerevisiae (strain YJM789) (Baker's yeast).